Here is a 167-residue protein sequence, read N- to C-terminus: Probable chorismate pyruvate-lyase (167 aa).

Residues Arg71, Ile110, and Glu150 each contribute to the substrate site.

Belongs to the UbiC family.

The protein resides in the cytoplasm. The enzyme catalyses chorismate = 4-hydroxybenzoate + pyruvate. It functions in the pathway cofactor biosynthesis; ubiquinone biosynthesis. Functionally, removes the pyruvyl group from chorismate, with concomitant aromatization of the ring, to provide 4-hydroxybenzoate (4HB) for the ubiquinone pathway. The chain is Probable chorismate pyruvate-lyase from Acinetobacter baylyi (strain ATCC 33305 / BD413 / ADP1).